We begin with the raw amino-acid sequence, 90 residues long: Small ribosomal subunit protein bS20 (90 aa).

The disordered stretch occupies residues 1 to 29; the sequence is MANTASAEKRNRQAQKRRARNVQVRTGVK.

This sequence belongs to the bacterial ribosomal protein bS20 family.

Binds directly to 16S ribosomal RNA. In Anaeromyxobacter sp. (strain Fw109-5), this protein is Small ribosomal subunit protein bS20.